We begin with the raw amino-acid sequence, 409 residues long: DNA polymerase IV 2 (409 aa).

The UmuC domain occupies 5–190 (IFMVDMESFF…LPIECLYGVG (186 aa)). Asp9 and Asp105 together coordinate Mg(2+). Glu106 is a catalytic residue.

It belongs to the DNA polymerase type-Y family. In terms of assembly, monomer. Mg(2+) serves as cofactor.

It is found in the cytoplasm. The catalysed reaction is DNA(n) + a 2'-deoxyribonucleoside 5'-triphosphate = DNA(n+1) + diphosphate. Its function is as follows. Poorly processive, error-prone DNA polymerase involved in untargeted mutagenesis. Copies undamaged DNA at stalled replication forks, which arise in vivo from mismatched or misaligned primer ends. These misaligned primers can be extended by PolIV. Exhibits no 3'-5' exonuclease (proofreading) activity. May be involved in translesional synthesis, in conjunction with the beta clamp from PolIII. The polypeptide is DNA polymerase IV 2 (dinB2) (Halalkalibacterium halodurans (strain ATCC BAA-125 / DSM 18197 / FERM 7344 / JCM 9153 / C-125) (Bacillus halodurans)).